Consider the following 93-residue polypeptide: MKENYNYPLDLSWSTTEMTEVLSFFNQVEKFYESKVEKEVFLESYNAFKKIVPSKMQEKQLGRDFELSSGYSLYHAVKEVKASGKRFVSADKA.

It belongs to the UPF0223 family.

The polypeptide is UPF0223 protein YfdD (yfdD) (Lactococcus lactis subsp. lactis (strain IL1403) (Streptococcus lactis)).